A 309-amino-acid chain; its full sequence is HPr kinase/phosphorylase (309 aa).

Catalysis depends on residues histidine 138 and lysine 159. Glycine 153–serine 160 provides a ligand contact to ATP. Serine 160 contributes to the Mg(2+) binding site. Aspartate 177 (proton acceptor; for phosphorylation activity. Proton donor; for dephosphorylation activity) is an active-site residue. Positions leucine 201–aspartate 210 are important for the catalytic mechanism of both phosphorylation and dephosphorylation. A Mg(2+)-binding site is contributed by glutamate 202. The active site involves arginine 243. The important for the catalytic mechanism of dephosphorylation stretch occupies residues proline 264–arginine 269.

Belongs to the HPrK/P family. Homohexamer. The cofactor is Mg(2+).

The catalysed reaction is [HPr protein]-L-serine + ATP = [HPr protein]-O-phospho-L-serine + ADP + H(+). It catalyses the reaction [HPr protein]-O-phospho-L-serine + phosphate + H(+) = [HPr protein]-L-serine + diphosphate. Functionally, catalyzes the ATP- as well as the pyrophosphate-dependent phosphorylation of a specific serine residue in HPr, a phosphocarrier protein of the phosphoenolpyruvate-dependent sugar phosphotransferase system (PTS). HprK/P also catalyzes the pyrophosphate-producing, inorganic phosphate-dependent dephosphorylation (phosphorolysis) of seryl-phosphorylated HPr (P-Ser-HPr). The two antagonistic activities of HprK/P are regulated by several intracellular metabolites, which change their concentration in response to the absence or presence of rapidly metabolisable carbon sources (glucose, fructose, etc.) in the growth medium. Therefore, by controlling the phosphorylation state of HPr, HPrK/P is a sensor enzyme that plays a major role in the regulation of carbon metabolism and sugar transport: it mediates carbon catabolite repression (CCR), and regulates PTS-catalyzed carbohydrate uptake and inducer exclusion. The protein is HPr kinase/phosphorylase of Streptococcus thermophilus (strain CNRZ 1066).